The chain runs to 535 residues: EH domain-containing protein 3 (535 aa).

Methionine 1 bears the N-acetylmethionine mark. The Dynamin-type G domain occupies 55-286; sequence FDNKPMVLLV…DLFRDIQSLP (232 aa). Positions 65-72 are G1 motif; that stretch reads GQYSTGKT. Residue 65-72 coordinates ATP; it reads GQYSTGKT. The G2 motif stretch occupies residues 91–92; it reads EP. Residues 153 to 156 are G3 motif; it reads DTPG. A coiled-coil region spans residues 198 to 227; sequence DEFSEVIKALKNHEDKMRVVLNKADQIETQ. Positions 219-222 are G4 motif; that stretch reads NKAD. Lysine 220 is an ATP binding site. A region of interest (G5 motif) is located at residue isoleucine 243. Tryptophan 258 is a binding site for ATP. A Glycyl lysine isopeptide (Lys-Gly) (interchain with G-Cter in SUMO) cross-link involves residue lysine 315. Serine 349 and serine 456 each carry phosphoserine. Residues 444–532 enclose the EH domain; sequence DKPMYDEIFY…AHLLPPSKRK (89 aa). The 36-residue stretch at 476–511 folds into the EF-hand domain; the sequence is LPNSVLGKIWKLADIDKDGMLDDDEFALANHLIKVK. Positions 489, 491, 493, 495, and 500 each coordinate Ca(2+). A Glycyl lysine isopeptide (Lys-Gly) (interchain with G-Cter in SUMO) cross-link involves residue lysine 511.

This sequence belongs to the TRAFAC class dynamin-like GTPase superfamily. Dynamin/Fzo/YdjA family. EHD subfamily. As to quaternary structure, homooligomer, and heterooligomer with EHD1, EHD2 and EHD4, ATP-binding is required for heterooligomerization. Interacts with PACSIN1. Interacts with PACSIN2. Interacts (via EH domain) with MICALL1. Interacts (via EH domain) with RAB11FIP2. Interacts with ANK2. In terms of tissue distribution, highly expressed in heart and brain and moderately expressed in kidney, liver, and placenta.

The protein localises to the recycling endosome membrane. The protein resides in the cell membrane. It localises to the cell projection. Its subcellular location is the cilium membrane. ATP- and membrane-binding protein that controls membrane reorganization/tubulation upon ATP hydrolysis. In vitro causes tubulation of endocytic membranes. Binding to phosphatidic acid induces its membrane tubulation activity. Plays a role in endocytic transport. Involved in early endosome to recycling endosome compartment (ERC), retrograde early endosome to Golgi, and endosome to plasma membrane (rapid recycling) protein transport. Involved in the regulation of Golgi maintenance and morphology. Involved in the recycling of internalized D1 dopamine receptor. Plays a role in cardiac protein trafficking probably implicating ANK2. Involved in the ventricular membrane targeting of SLC8A1 and CACNA1C and probably the atrial membrane localization of CACNA1GG and CACNA1H implicated in the regulation of atrial myocyte excitability and cardiac conduction. In conjunction with EHD4 may be involved in endocytic trafficking of KDR/VEGFR2 implicated in control of glomerular function. Involved in the rapid recycling of integrin beta-3 implicated in cell adhesion maintenance. Involved in the unidirectional retrograde dendritic transport of endocytosed BACE1 and in efficient sorting of BACE1 to axons implicating a function in neuronal APP processing. Plays a role in the formation of the ciliary vesicle, an early step in cilium biogenesis; possibly sharing redundant functions with EHD1. This chain is EH domain-containing protein 3, found in Homo sapiens (Human).